Here is a 387-residue protein sequence, read N- to C-terminus: F-box/LRR-repeat/kelch-repeat protein At2g29770 (387 aa).

The disordered stretch occupies residues 1–34 (MVFISETSDDGSNGGDPTKNPQEEEEENLPPIPQ). The 48-residue stretch at 31 to 78 (PIPQGIPDELIESTVLLIRRCHYPTLSLLSKTFRRVISSSELYKSRFI) folds into the F-box domain. Residues 105 to 128 (CNIPRNISLHLREIKSLPPLNHGS) form an LRR 1 repeat. 2 Kelch repeats span residues 136 to 183 (HMYV…VIDG) and 184 to 231 (RIYV…FVTS). The stretch at 196–219 (DHWIEVFDIENRIWSSVPHHRYCN) is one LRR 2 repeat.

The polypeptide is F-box/LRR-repeat/kelch-repeat protein At2g29770 (Arabidopsis thaliana (Mouse-ear cress)).